Reading from the N-terminus, the 442-residue chain is MSENVYLNEALNVVDQCFKTFFDKYTDRMGSAFACSGTIDKDHIFLVWSVAVYAEAMADSLRYTSKFERKFEHVFQALKKYWSPVFNACCAFHYFEGNDDVYYDDNAQVAIGLATAGYYTTNSSRRDHYVSRAESIISLIINKGWNQQRGGIAWHTRTTGPPWTNLNACSTSMSAVAALRLALALDDPNKKQHLVSFAWNCVRWIQENLLDENHIVCDGLSLKDGKWVLDKARFTYNTGTTMTAMSLLMGLGEFTKGLQDIEKLPTYLEDMARGALDTNGPLYDQSCNGSFKVWSDNTFFAQHLSEGLMTFSYAMPSSALAKPAQKMVLDQADFLMKYLRIPKEGLYYRNFGLYKLSPELTASFNKFFNANKQFQPDKDERIQQEGPVEQRPLCPTLIGSAGAARMLFSAAEIVNRNNPSSGESTTLPQPSHGKKDKDCVIS.

Thr-361 carries the phosphothreonine modification. Positions 416–429 (RNNPSSGESTTLPQ) are enriched in polar residues. The interval 416-442 (RNNPSSGESTTLPQPSHGKKDKDCVIS) is disordered. Residues 433-442 (GKKDKDCVIS) show a composition bias toward basic and acidic residues.

The protein resides in the cytoplasm. It is found in the nucleus. In terms of biological role, has a role in meiosis. The chain is Meiotically up-regulated gene 191 protein (mug191) from Schizosaccharomyces pombe (strain 972 / ATCC 24843) (Fission yeast).